We begin with the raw amino-acid sequence, 149 residues long: Large ribosomal subunit protein bL9 (149 aa).

This sequence belongs to the bacterial ribosomal protein bL9 family. As to quaternary structure, part of the 50S ribosomal subunit. In stalled/collided disomes (pairs of ribosomes where the leading ribosome is stalled and a second ribosome has collided with it), bL9 in the collided ribosome contacts bS6 and uL2, while it contacts only helices of the 16S rRNA in the stalled ribosome; the inter-ribosome bridge thus formed is different from that formed between normally translating ribosomes.

Its function is as follows. Binds to the 23S rRNA. This Bacillus subtilis (strain 168) protein is Large ribosomal subunit protein bL9.